Here is a 314-residue protein sequence, read N- to C-terminus: Mycothiol acetyltransferase (314 aa).

Glu39 contacts 1D-myo-inositol 2-(L-cysteinylamino)-2-deoxy-alpha-D-glucopyranoside. An acetyl-CoA-binding site is contributed by 80-82; it reads LTA. Residues 159-313 enclose the N-acetyltransferase domain; that stretch reads FVCRRFDPIS…PTGELGHEPP (155 aa). 1D-myo-inositol 2-(L-cysteinylamino)-2-deoxy-alpha-D-glucopyranoside contacts are provided by Glu186, Lys228, and Glu237. Acetyl-CoA is bound by residues 241-243 and 248-254; these read LGV and QGQGVGR. Residue Tyr275 participates in 1D-myo-inositol 2-(L-cysteinylamino)-2-deoxy-alpha-D-glucopyranoside binding.

Belongs to the acetyltransferase family. MshD subfamily. As to quaternary structure, monomer.

It carries out the reaction 1D-myo-inositol 2-(L-cysteinylamino)-2-deoxy-alpha-D-glucopyranoside + acetyl-CoA = mycothiol + CoA + H(+). In terms of biological role, catalyzes the transfer of acetyl from acetyl-CoA to desacetylmycothiol (Cys-GlcN-Ins) to form mycothiol. The sequence is that of Mycothiol acetyltransferase from Jonesia denitrificans (strain ATCC 14870 / DSM 20603 / BCRC 15368 / CIP 55.134 / JCM 11481 / NBRC 15587 / NCTC 10816 / Prevot 55134) (Listeria denitrificans).